A 224-amino-acid chain; its full sequence is MANSGLQLLGYFLALGGWVGIIASTALPQWKQSSYAGDAIITAVGLYEGLWMSCASQSTGQVQCKLYDSLLALDGHIQSARALMVVAVLLGFVAMVLSVVGMKCTRVGDSNPIAKGRVAIAGGALFILAGLCTLTAVSWYATLVTQEFFNPSTPVNARYEFGPALFVGWASAGLAVLGGSFLCCTCPEPERPNSSPQPYRPGPSAAAREPVVKLPASAKGPLGV.

Residues 1-7 (MANSGLQ) lie on the Cytoplasmic side of the membrane. Residues 8 to 28 (LLGYFLALGGWVGIIASTALP) traverse the membrane as a helical segment. The Extracellular portion of the chain corresponds to 29 to 81 (QWKQSSYAGDAIITAVGLYEGLWMSCASQSTGQVQCKLYDSLLALDGHIQSAR). An intrachain disulfide couples Cys-54 to Cys-64. A helical membrane pass occupies residues 82 to 102 (ALMVVAVLLGFVAMVLSVVGM). Residues 103–117 (KCTRVGDSNPIAKGR) are Cytoplasmic-facing. The chain crosses the membrane as a helical span at residues 118–138 (VAIAGGALFILAGLCTLTAVS). Residues 139–160 (WYATLVTQEFFNPSTPVNARYE) are Extracellular-facing. Residues 161–181 (FGPALFVGWASAGLAVLGGSF) form a helical membrane-spanning segment. Topologically, residues 182 to 224 (LCCTCPEPERPNSSPQPYRPGPSAAAREPVVKLPASAKGPLGV) are cytoplasmic. Positions 191–224 (RPNSSPQPYRPGPSAAAREPVVKLPASAKGPLGV) are disordered.

This sequence belongs to the claudin family. Can form homo- and heteropolymeric tight junction strands. Interacts with other claudins including CLDN3, CLDN10, CLDN16 and CLDN18 with highest affinity for CLDN16. Interacts (via PDZ-binding motif TRV) with TJP1 (via PDZ domain).

The protein localises to the cell junction. The protein resides in the tight junction. It localises to the cell membrane. The catalysed reaction is Mg(2+)(in) = Mg(2+)(out). It catalyses the reaction Ca(2+)(in) = Ca(2+)(out). It carries out the reaction Na(+)(in) = Na(+)(out). The enzyme catalyses K(+)(in) = K(+)(out). The catalysed reaction is Rb(+)(in) = Rb(+)(out). It catalyses the reaction Cs(+)(in) = Cs(+)(out). It carries out the reaction Li(+)(in) = Li(+)(out). Functionally, forms paracellular channels: coassembles with CLDN16 into tight junction strands with cation-selective channels through the strands, conveying epithelial permeability in a process known as paracellular tight junction permeability. Involved in the maintenance of ion gradients along the nephron. In the thick ascending limb (TAL) of Henle's loop, facilitates sodium paracellular permeability from the interstitial compartment to the lumen, contributing to the lumen-positive transepithelial potential that drives paracellular magnesium and calcium reabsorption. Forms paracellular barriers on its own. In the peripheral nervous system, represents a major constituent of the tight junctions in Schwann cells and contributes to electrical sealing. During retinal neurogenesis, may regulate the barrier properties of tight junctions in retinal pigment epithelium, required for proper retinal tissue differentiation and vision. The chain is Claudin-19 from Homo sapiens (Human).